Consider the following 383-residue polypeptide: MKSKTYETHFPPLSAEQLAENRKKKVICGMSGGVDSSVSAFILQQQGYQVEGLFMKNWEEDDDTDYCTAAADLADAQAVCDKLGIKLHKINFAAEYWDNVFEHFLQEYKAGRTPNPDILCNKEIKFKAFLDYAAEDLGADYIATGHYVRRGEKDGQCQLLRGLDNNKDQSYFLYTLSKDQVAQSLFPVGEIEKPIVRAIAEDLGLATAKKKDSTGICFIGERKFKDFLARYLPAQPGEIRTVEGKVVGRHDGLMYHTLGQRKGLGIGGVKGMGEDPFYVVEKDLVNNVLVVAQGHDNSALLSSGLIASQLHWVDRQPIRQPVRCTVKTRYRQEDIPCEIQPINDETIRVVFDEPQIAVTPGQSAVFYQGEICLGGGVIETQIK.

Residues 29 to 36 (GMSGGVDS) and Met-55 each bind ATP. Residues 115 to 117 (NPD) are interaction with target base in tRNA. Cys-120 acts as the Nucleophile in catalysis. A disulfide bridge links Cys-120 with Cys-217. Gly-145 contacts ATP. The interaction with tRNA stretch occupies residues 167–169 (KDQ). The active-site Cysteine persulfide intermediate is the Cys-217. Residues 329-330 (RY) are interaction with tRNA.

This sequence belongs to the MnmA/TRMU family.

The protein resides in the cytoplasm. The catalysed reaction is S-sulfanyl-L-cysteinyl-[protein] + uridine(34) in tRNA + AH2 + ATP = 2-thiouridine(34) in tRNA + L-cysteinyl-[protein] + A + AMP + diphosphate + H(+). Catalyzes the 2-thiolation of uridine at the wobble position (U34) of tRNA, leading to the formation of s(2)U34. The sequence is that of tRNA-specific 2-thiouridylase MnmA from Pasteurella multocida (strain Pm70).